The chain runs to 175 residues: Ribosome maturation factor RimM (175 aa).

In terms of domain architecture, PRC barrel spans 96–175 (EGDFYWHDLI…TIEVDWDAGF (80 aa)).

The protein belongs to the RimM family. As to quaternary structure, binds ribosomal protein uS19.

The protein localises to the cytoplasm. Functionally, an accessory protein needed during the final step in the assembly of 30S ribosomal subunit, possibly for assembly of the head region. Essential for efficient processing of 16S rRNA. May be needed both before and after RbfA during the maturation of 16S rRNA. It has affinity for free ribosomal 30S subunits but not for 70S ribosomes. This Histophilus somni (strain 129Pt) (Haemophilus somnus) protein is Ribosome maturation factor RimM.